The following is a 154-amino-acid chain: Transcriptional repressor NrdR (154 aa).

A zinc finger lies at 3–34 (CPFCGANDTKVIDSRLVAEGEQVRRRRECLAC). The region spanning 49–139 (PRLIKQDGSR…VYRRFQDLNE (91 aa)) is the ATP-cone domain.

It belongs to the NrdR family. Zn(2+) is required as a cofactor.

In terms of biological role, negatively regulates transcription of bacterial ribonucleotide reductase nrd genes and operons by binding to NrdR-boxes. In Pseudomonas syringae pv. tomato (strain ATCC BAA-871 / DC3000), this protein is Transcriptional repressor NrdR.